The following is a 294-amino-acid chain: MANITAQMVKELREKTGAGMMDCKKALVETEGDMEKAIDYLREKGIAKAAKKSDRVASEGMTHVISNEKHAVVLEVNAETDFVAKNDNFQQLVDALAKQILEVRPDSLEDALKTEMPNGQTVQDYITEAITKIGENISLRRFEVKEKADNSAFGEYIHMNGRIGVLTLLEGTTDTTVAKDVAMHIAAINPKYISREDVSTEEVEHEKEVLTQQALNEGKPANIVEKMVEGRLKKYLSEISLEDQPFVKNPDITVGEYVKQSGGKVVSFVRFEVGEGIEKKEDNFVEEVMSQVKK.

The segment at 80 to 83 (TDFV) is involved in Mg(2+) ion dislocation from EF-Tu.

The protein belongs to the EF-Ts family.

It localises to the cytoplasm. Its function is as follows. Associates with the EF-Tu.GDP complex and induces the exchange of GDP to GTP. It remains bound to the aminoacyl-tRNA.EF-Tu.GTP complex up to the GTP hydrolysis stage on the ribosome. This Listeria innocua serovar 6a (strain ATCC BAA-680 / CLIP 11262) protein is Elongation factor Ts.